A 250-amino-acid polypeptide reads, in one-letter code: MSRRYDSRTTIFSPEGRLYQVEYAMEAIGNAGSALGVLAADGVVLVGEKKVTSKLLQTSRSAEKMYKIDSHLACAVAGIMSDANILLNTARLHAQRYALSYQEPIPVEQLVQSLCDTKQGYTQFGGLRPFGVSFLFAGWDKHHGFQLYMSDPSGNYSGWKAAAVGANSQAAQSMLKQDYRDGLTREEAVALALKVLSKTMDSTSLTAEKLELAEVFLQPGTGEVQYQVCSPEAMGKLLAKAGLSQPAPEA.

In terms of assembly, the 26S proteasome consists of a 20S proteasome core and two 19S regulatory subunits. The 20S proteasome core is composed of 28 subunits that are arranged in four stacked rings, resulting in a barrel-shaped structure. The two end rings are each formed by seven alpha subunits, and the two central rings are each formed by seven beta subunits. The catalytic chamber with the active sites is on the inside of the barrel.

Its subcellular location is the cytoplasm. The protein localises to the nucleus. In terms of biological role, the proteasome is a multicatalytic proteinase complex which is characterized by its ability to cleave peptides with Arg, Phe, Tyr, Leu, and Glu adjacent to the leaving group at neutral or slightly basic pH. The proteasome has an ATP-dependent proteolytic activity. The chain is Proteasome subunit alpha type-4-2 from Oryza sativa subsp. indica (Rice).